Here is a 383-residue protein sequence, read N- to C-terminus: Lipid-A-disaccharide synthase (383 aa).

The protein belongs to the LpxB family.

The enzyme catalyses a lipid X + a UDP-2-N,3-O-bis[(3R)-3-hydroxyacyl]-alpha-D-glucosamine = a lipid A disaccharide + UDP + H(+). It participates in bacterial outer membrane biogenesis; LPS lipid A biosynthesis. In terms of biological role, condensation of UDP-2,3-diacylglucosamine and 2,3-diacylglucosamine-1-phosphate to form lipid A disaccharide, a precursor of lipid A, a phosphorylated glycolipid that anchors the lipopolysaccharide to the outer membrane of the cell. The sequence is that of Lipid-A-disaccharide synthase from Anaeromyxobacter sp. (strain K).